The sequence spans 525 residues: Light-independent protochlorophyllide reductase subunit B (525 aa).

Residue D36 coordinates [4Fe-4S] cluster. The active-site Proton donor is the D290. Position 425-426 (425-426 (GL)) interacts with substrate.

Belongs to the ChlB/BchB/BchZ family. Protochlorophyllide reductase is composed of three subunits; ChlL, ChlN and ChlB. Forms a heterotetramer of two ChlB and two ChlN subunits. It depends on [4Fe-4S] cluster as a cofactor.

It carries out the reaction chlorophyllide a + oxidized 2[4Fe-4S]-[ferredoxin] + 2 ADP + 2 phosphate = protochlorophyllide a + reduced 2[4Fe-4S]-[ferredoxin] + 2 ATP + 2 H2O. It functions in the pathway porphyrin-containing compound metabolism; chlorophyll biosynthesis (light-independent). Functionally, component of the dark-operative protochlorophyllide reductase (DPOR) that uses Mg-ATP and reduced ferredoxin to reduce ring D of protochlorophyllide (Pchlide) to form chlorophyllide a (Chlide). This reaction is light-independent. The NB-protein (ChlN-ChlB) is the catalytic component of the complex. The chain is Light-independent protochlorophyllide reductase subunit B from Prochlorococcus marinus (strain MIT 9312).